A 483-amino-acid polypeptide reads, in one-letter code: Dihydrolipoyllysine-residue acetyltransferase component of pyruvate dehydrogenase complex, mitochondrial (483 aa).

The N-terminal 28 residues, 1 to 28, are a transit peptide targeting the mitochondrion; it reads MLSANMLRRMHHGVAVTRMLLVSNGKVQ. The 77-residue stretch at 53 to 129 folds into the Lipoyl-binding domain; the sequence is HTVINMPALS…PVGKPLAVTV (77 aa). K94 is subject to N6-lipoyllysine. Disordered stretches follow at residues 143–187 and 234–254; these read IEDS…DRVF and EAAA…APGD. Residues 146 to 160 are compositionally biased toward basic and acidic residues; the sequence is SSAKEPSAKSGEEKS. Polar residues predominate over residues 161 to 178; it reads APSSEKQSKETSSPSNVS. The Peripheral subunit-binding (PSBD) domain occupies 187–224; that stretch reads FASPLARKLAEEKDLDLSQIRGSGPNGRIIKVDIENFK. A compositionally biased stretch (low complexity) spans 235 to 252; sequence AAAKATTPAASAADAAAP. Residues H456 and D460 contribute to the active site.

This sequence belongs to the 2-oxoacid dehydrogenase family. (R)-lipoate serves as cofactor.

The protein localises to the mitochondrion matrix. The catalysed reaction is N(6)-[(R)-dihydrolipoyl]-L-lysyl-[protein] + acetyl-CoA = N(6)-[(R)-S(8)-acetyldihydrolipoyl]-L-lysyl-[protein] + CoA. The pyruvate dehydrogenase complex catalyzes the overall conversion of pyruvate to acetyl-CoA and CO(2). It contains multiple copies of three enzymatic components: pyruvate dehydrogenase (E1), dihydrolipoamide acetyltransferase (E2) and lipoamide dehydrogenase (E3). The protein is Dihydrolipoyllysine-residue acetyltransferase component of pyruvate dehydrogenase complex, mitochondrial of Schizosaccharomyces pombe (strain 972 / ATCC 24843) (Fission yeast).